The following is a 475-amino-acid chain: MEQPSDSAPVYARRIMGIETEYGITASASNGQRVMSPDEIARVLFRPIVSKYSSSNIFSPNASRLYLDVGSHPEIATAECDSLSQLIAYERAGDAMVNRMAVQAEETLADEGEKRAVYLFKNNVDSAGNSYGCHENYLIGRHVVLKDLGKALLPFMITRQLICGVGMIRPAKGDDPACFVLSQRADQVWEGVSSATTRSRPIINTRDEPHGDSKRFRRMHVIVGDSNMAEPTMALKVGSTLLMLEMLEAGFEVPNLSVLEPIQHIRAIALDPTGRTELPLEGGGSTTALAVQQELCTAAERWLEHREEAGTPTTELARVVDLWKRTLQAIDTQDFSSVDREIDWVIKRSLLNRYRDRLGGDWAHPKLAQIDLTYHDIRPGRGLYSVLEQRGMVERWIDDAAIDAAIDTAPQTTRAKLRGEFLAVARELDAAVTVDWTRMKVNRPEPMTEEFSDPFVSEDPRLDGLLDYMRSHPGS.

Position 19 (Glu-19) interacts with Mg(2+). ATP is bound at residue Arg-64. Residue Tyr-66 coordinates Mg(2+). Residue Asp-68 is the Proton acceptor of the active site. Glu-74 is a Mg(2+) binding site. Positions 77 and 436 each coordinate ATP.

It belongs to the Pup ligase/Pup deamidase family. Pup-conjugating enzyme subfamily.

The enzyme catalyses ATP + [prokaryotic ubiquitin-like protein]-L-glutamate + [protein]-L-lysine = ADP + phosphate + N(6)-([prokaryotic ubiquitin-like protein]-gamma-L-glutamyl)-[protein]-L-lysine.. Its pathway is protein degradation; proteasomal Pup-dependent pathway. It functions in the pathway protein modification; protein pupylation. Catalyzes the covalent attachment of the prokaryotic ubiquitin-like protein modifier Pup to the proteasomal substrate proteins, thereby targeting them for proteasomal degradation. This tagging system is termed pupylation. The ligation reaction involves the side-chain carboxylate of the C-terminal glutamate of Pup and the side-chain amino group of a substrate lysine. This chain is Pup--protein ligase, found in Corynebacterium aurimucosum (strain ATCC 700975 / DSM 44827 / CIP 107346 / CN-1) (Corynebacterium nigricans).